The primary structure comprises 181 residues: Adenylate kinase 2 (181 aa).

10–15 (GSGKST) serves as a coordination point for ATP. Positions 30–59 (SMGGILREAIANATPLGIKAKPYVERGDLL) are NMP. AMP contacts are provided by residues Arg-36, 57-59 (DLL), 85-88 (GYPR), and Gln-92. The interval 126–132 (NRSLFDD) is LID. Position 127 (Arg-127) interacts with ATP. Arg-140 is a binding site for AMP. Residue Pro-168 participates in ATP binding.

Belongs to the adenylate kinase family. Monomer.

The protein localises to the cytoplasm. The catalysed reaction is AMP + ATP = 2 ADP. The protein operates within purine metabolism; AMP biosynthesis via salvage pathway; AMP from ADP: step 1/1. Catalyzes the reversible transfer of the terminal phosphate group between ATP and AMP. Plays an important role in cellular energy homeostasis and in adenine nucleotide metabolism. This Synechocystis sp. (strain ATCC 27184 / PCC 6803 / Kazusa) protein is Adenylate kinase 2.